A 297-amino-acid chain; its full sequence is 1D-myo-inositol 2-acetamido-2-deoxy-alpha-D-glucopyranoside deacetylase (297 aa).

The Zn(2+) site is built by His-11, Asp-14, and His-154.

It belongs to the MshB deacetylase family. It depends on Zn(2+) as a cofactor.

The catalysed reaction is 1D-myo-inositol 2-acetamido-2-deoxy-alpha-D-glucopyranoside + H2O = 1D-myo-inositol 2-amino-2-deoxy-alpha-D-glucopyranoside + acetate. Its function is as follows. Catalyzes the deacetylation of 1D-myo-inositol 2-acetamido-2-deoxy-alpha-D-glucopyranoside (GlcNAc-Ins) in the mycothiol biosynthesis pathway. In Tsukamurella paurometabola (strain ATCC 8368 / DSM 20162 / CCUG 35730 / CIP 100753 / JCM 10117 / KCTC 9821 / NBRC 16120 / NCIMB 702349 / NCTC 13040) (Corynebacterium paurometabolum), this protein is 1D-myo-inositol 2-acetamido-2-deoxy-alpha-D-glucopyranoside deacetylase.